The primary structure comprises 635 residues: Threonine--tRNA ligase (635 aa).

The region spanning 1–61 (MVSIRLPDGS…DRDASLAIVT (61 aa)) is the TGS domain. The catalytic stretch occupies residues 242–533 (DHRKLGKQLD…LIEHHAGAMP (292 aa)). The Zn(2+) site is built by Cys333, His384, and His510.

It belongs to the class-II aminoacyl-tRNA synthetase family. Homodimer. Zn(2+) is required as a cofactor.

It localises to the cytoplasm. It catalyses the reaction tRNA(Thr) + L-threonine + ATP = L-threonyl-tRNA(Thr) + AMP + diphosphate + H(+). In terms of biological role, catalyzes the attachment of threonine to tRNA(Thr) in a two-step reaction: L-threonine is first activated by ATP to form Thr-AMP and then transferred to the acceptor end of tRNA(Thr). Also edits incorrectly charged L-seryl-tRNA(Thr). In Burkholderia vietnamiensis (strain G4 / LMG 22486) (Burkholderia cepacia (strain R1808)), this protein is Threonine--tRNA ligase.